The primary structure comprises 134 residues: Cytochrome b5 (134 aa).

The region spanning 6–82 is the Cytochrome b5 heme-binding domain; it reads VKYFTRAEVA…MKQYKVGELV (77 aa). His-41 and His-65 together coordinate heme. A helical membrane pass occupies residues 111–131; that stretch reads WLMPFVLGLVATLIYKFFFGT.

Belongs to the cytochrome b5 family.

The protein resides in the endoplasmic reticulum membrane. It is found in the microsome membrane. Its function is as follows. Cytochrome b5 is a membrane bound hemoprotein which function as an electron carrier for several membrane bound oxygenases. The protein is Cytochrome b5 (Cyt-b5) of Musca domestica (House fly).